We begin with the raw amino-acid sequence, 436 residues long: Adenylosuccinate synthetase (436 aa).

GTP-binding positions include Gly-12–Lys-18 and Gly-40–Thr-42. Residue Asp-13 is the Proton acceptor of the active site. Mg(2+) is bound by residues Asp-13 and Gly-40. IMP-binding positions include Asp-13–Lys-16, Asn-38–His-41, Thr-128, Arg-142, Gln-223, Thr-238, and Arg-302. His-41 functions as the Proton donor in the catalytic mechanism. Thr-298–Arg-304 lines the substrate pocket. GTP contacts are provided by residues Arg-304, Lys-330 to Asp-332, and Ser-412 to Gly-414.

Belongs to the adenylosuccinate synthetase family. As to quaternary structure, homodimer. Requires Mg(2+) as cofactor.

It localises to the cytoplasm. It catalyses the reaction IMP + L-aspartate + GTP = N(6)-(1,2-dicarboxyethyl)-AMP + GDP + phosphate + 2 H(+). It functions in the pathway purine metabolism; AMP biosynthesis via de novo pathway; AMP from IMP: step 1/2. Plays an important role in the de novo pathway of purine nucleotide biosynthesis. Catalyzes the first committed step in the biosynthesis of AMP from IMP. This Prochlorococcus marinus (strain MIT 9301) protein is Adenylosuccinate synthetase.